A 158-amino-acid chain; its full sequence is Small ribosomal subunit protein uS9 (158 aa).

Positions 1-10 (MSDTMQSLDQ) are enriched in polar residues. Residues 1-35 (MSDTMQSLDQLSALKTAAPDAPKREKKVDKQGRAY) form a disordered region. The segment covering 21-32 (APKREKKVDKQG) has biased composition (basic and acidic residues).

The protein belongs to the universal ribosomal protein uS9 family.

The sequence is that of Small ribosomal subunit protein uS9 from Afipia carboxidovorans (strain ATCC 49405 / DSM 1227 / KCTC 32145 / OM5) (Oligotropha carboxidovorans).